The following is a 227-amino-acid chain: Thymidine kinase (227 aa).

ATP-binding positions include Gly-15–Thr-22 and Asp-87–Gln-90. Residue Glu-88 is the Proton acceptor of the active site. Residues Cys-144, Cys-147, Cys-176, and Cys-179 each coordinate Zn(2+). Positions Arg-198 to Ala-227 are disordered. Positions Ala-217–Ala-227 are enriched in low complexity.

It belongs to the thymidine kinase family. In terms of assembly, homotetramer.

Its subcellular location is the cytoplasm. It carries out the reaction thymidine + ATP = dTMP + ADP + H(+). The sequence is that of Thymidine kinase from Salinibacter ruber (strain DSM 13855 / M31).